A 311-amino-acid chain; its full sequence is Cyclin-dependent kinase B1-2 (311 aa).

Residues 4-303 (YEKLEKVGEG…AKAALDHPYF (300 aa)) form the Protein kinase domain. ATP is bound by residues 10-18 (VGEGTYGKV) and Lys-33. Tyr-15 carries the phosphotyrosine modification. Catalysis depends on Asp-144, which acts as the Proton acceptor. A Phosphothreonine modification is found at Thr-178.

This sequence belongs to the protein kinase superfamily. CMGC Ser/Thr protein kinase family. CDC2/CDKX subfamily. Interacts with CKS1. Expressed in flowers.

The enzyme catalyses L-seryl-[protein] + ATP = O-phospho-L-seryl-[protein] + ADP + H(+). It catalyses the reaction L-threonyl-[protein] + ATP = O-phospho-L-threonyl-[protein] + ADP + H(+). It carries out the reaction [DNA-directed RNA polymerase] + ATP = phospho-[DNA-directed RNA polymerase] + ADP + H(+). In terms of biological role, together with CDKB1-1, promotes both the last division in the stomatal cell lineage as well as the number of stomata. In collaboration with MYB124 and MYB88, restrict the G1/S transition and chloroplast and nuclear number during stomatal formation, and normally maintain fate and developmental progression throughout the stomatal cell lineage. The polypeptide is Cyclin-dependent kinase B1-2 (CDKB1-2) (Arabidopsis thaliana (Mouse-ear cress)).